Consider the following 370-residue polypeptide: Translocating chain-associated membrane protein 2 (370 aa).

The Cytoplasmic portion of the chain corresponds to 1 to 22 (MAFRRRTKSYPLFSQEFVIHNH). The helical transmembrane segment at 23-43 (ADIGFCLVLCVLIGLMFEVTA) threads the bilayer. Residues 44–75 (KTAFLFILPQYNISVPTADSETVHYHYGPKDL) lie on the Extracellular side of the membrane. An N-linked (GlcNAc...) asparagine glycan is attached at asparagine 55. Residues 76–96 (VTILFYIFITIILHAVVQEYI) form a helical membrane-spanning segment. Residues 97–119 (LDKISKRLHLSKVKHSKFNESGQ) are Cytoplasmic-facing. The TLC domain occupies 112–321 (SKFNESGQLV…HSQLRHWREY (210 aa)). Residues 120–140 (LVVFHFTSVIWCFYVVVTEGY) form a helical membrane-spanning segment. Residues 141–159 (LTNPRSLWEDYPHVHLPFQ) are Extracellular-facing. A helical membrane pass occupies residues 160–180 (VKFFYLCQLAYWLHALPELYF). The Cytoplasmic portion of the chain corresponds to 181–191 (QKVRKEEIPRQ). A helical membrane pass occupies residues 192-209 (LQYICLYLVHIAGAYLLN). Topologically, residues 210–214 (LSRLG) are extracellular. Residues 215-235 (LILLLLQYSTEFLFHTARLFY) form a helical membrane-spanning segment. At 236-250 (FADENNEKLFSAWAA) the chain is on the cytoplasmic side. A helical membrane pass occupies residues 251-271 (VFGVTRLFILTLAVLAIGFGL). At 272–287 (ARMENQAFDPEKGNFN) the chain is on the extracellular side. A helical membrane pass occupies residues 288 to 308 (TLFCRLCVLLLVCAAQAWLMW). Over 309–370 (RFIHSQLRHW…SPRTKKLKSP (62 aa)) the chain is Cytoplasmic. A disordered region spans residues 348 to 370 (YHENGVVKAENGTSPRTKKLKSP).

The protein belongs to the TRAM family. As to quaternary structure, interacts with SERCA2B and COL1A1.

The protein localises to the membrane. Functionally, necessary for collagen type I synthesis. May couple the activity of the ER Ca(2+) pump SERCA2B with the activity of the translocon. This coupling may increase the local Ca(2+) concentration at the site of collagen synthesis, and a high Ca(2+) concentration may be necessary for the function of molecular chaperones involved in collagen folding. Required for proper insertion of the first transmembrane helix N-terminus of TM4SF20 into the ER lumen, may act as a ceramide sensor for regulated alternative translocation (RAT). This chain is Translocating chain-associated membrane protein 2 (TRAM2), found in Homo sapiens (Human).